Here is a 533-residue protein sequence, read N- to C-terminus: Spindle pole body protein CSA6 (533 aa).

Disordered regions lie at residues 1 to 32 and 53 to 130; these read MEDS…SDLT and DKYD…QEDE. Basic and acidic residues-rich tracts occupy residues 18–30 and 53–68; these read PEIK…KTSD and DKYD…DLTP. The span at 83-94 shows a compositional bias: low complexity; the sequence is PSKFSSSIPQKP. Over residues 103-121 the composition is skewed to polar residues; it reads SSPTKNYTDHINQLRSGPN. Residues 136–236 are a coiled coil; sequence KYEIKRLKQE…RSERDELVKD (101 aa). Positions 309–318 are enriched in basic and acidic residues; it reads EKDKPSEDKT. 2 disordered regions span residues 309–329 and 349–453; these read EKDK…SKDA and SANS…QSTK. Polar residues-rich tracts occupy residues 349–392 and 405–421; these read SANS…SNSQ and IYSS…QSSH. Basic and acidic residues predominate over residues 432–445; that stretch reads PRVERDHWTDRPPS.

The protein localises to the cytoplasm. Its subcellular location is the cytoskeleton. It localises to the microtubule organizing center. It is found in the spindle pole body. Its function is as follows. Plays a role in mitotic spindle pole body organization, possibly at the point of spindle pole body separation. Required for mitotic exit. The protein is Spindle pole body protein CSA6 of Candida dubliniensis (strain CD36 / ATCC MYA-646 / CBS 7987 / NCPF 3949 / NRRL Y-17841) (Yeast).